Consider the following 247-residue polypeptide: 1-(5-phosphoribosyl)-5-[(5-phosphoribosylamino)methylideneamino] imidazole-4-carboxamide isomerase (247 aa).

Asp-8 functions as the Proton acceptor in the catalytic mechanism. Asp-129 serves as the catalytic Proton donor.

The protein belongs to the HisA/HisF family.

Its subcellular location is the cytoplasm. The catalysed reaction is 1-(5-phospho-beta-D-ribosyl)-5-[(5-phospho-beta-D-ribosylamino)methylideneamino]imidazole-4-carboxamide = 5-[(5-phospho-1-deoxy-D-ribulos-1-ylimino)methylamino]-1-(5-phospho-beta-D-ribosyl)imidazole-4-carboxamide. Its pathway is amino-acid biosynthesis; L-histidine biosynthesis; L-histidine from 5-phospho-alpha-D-ribose 1-diphosphate: step 4/9. This is 1-(5-phosphoribosyl)-5-[(5-phosphoribosylamino)methylideneamino] imidazole-4-carboxamide isomerase from Bradyrhizobium sp. (strain BTAi1 / ATCC BAA-1182).